We begin with the raw amino-acid sequence, 229 residues long: Lipoprotein-releasing system ATP-binding protein LolD 1 (229 aa).

The ABC transporter domain occupies Leu2–Ala229. ATP is bound at residue Gly38–Thr45.

Belongs to the ABC transporter superfamily. Lipoprotein translocase (TC 3.A.1.125) family. In terms of assembly, the complex is composed of two ATP-binding proteins (LolD) and two transmembrane proteins (LolC and LolE).

It localises to the cell inner membrane. Its function is as follows. Part of the ABC transporter complex LolCDE involved in the translocation of mature outer membrane-directed lipoproteins, from the inner membrane to the periplasmic chaperone, LolA. Responsible for the formation of the LolA-lipoprotein complex in an ATP-dependent manner. The sequence is that of Lipoprotein-releasing system ATP-binding protein LolD 1 from Rhodopirellula baltica (strain DSM 10527 / NCIMB 13988 / SH1).